The primary structure comprises 422 residues: Cyclin-A2 (422 aa).

Methionine 1 carries the N-acetylmethionine modification. A disordered region spans residues methionine 1–arginine 62. Serine 5 bears the Phosphoserine mark.

Belongs to the cyclin family. Cyclin AB subfamily. Interacts with the CDK1 and CDK2 protein kinases to form serine/threonine kinase holoenzyme complexes. Interacts with CDK1 (hyperphosphorylated form in G1 and underphosphorylated forms in S and G2). Interacts with CDK2; the interaction increases from G1 to G2. Interacts (associated with CDK2 but not with CDK1) with SCAPER; regulates the activity of CCNA2/CDK2 by transiently maintaining CCNA2 in the cytoplasm. Forms a ternary complex with CDK2 and CDKN1B; CDKN1B inhibits the kinase activity of CDK2 through conformational rearrangements. Interacts with INCA1. As to quaternary structure, (Microbial infection) Interacts with mouse cytomegalovirus/MCMV kinase M97; this interaction sequesters CCNA2 to the cytoplasm. In terms of processing, polyubiquitinated via 'Lys-11'-linked ubiquitin by the anaphase-promoting complex (APC/C), leading to its degradation by the proteasome. Deubiquitinated and stabilized by USP37 enables entry into S phase. Ubiquitinated during the G1 phase by the SCF(FBXO31) complex, leading to its proteasomal degradation. In terms of tissue distribution, ubiquitous. In the testis, expressed in germ cells and in the ovary, in both germline and somatic cells.

It is found in the nucleus. It localises to the cytoplasm. Functionally, cyclin which controls both the G1/S and the G2/M transition phases of the cell cycle. Functions through the formation of specific serine/threonine kinase holoenzyme complexes with the cyclin-dependent protein kinases CDK1 and CDK2. The cyclin subunit confers the substrate specificity of these complexes and differentially interacts with and activates CDK1 and CDK2 throughout the cell cycle. The chain is Cyclin-A2 from Mus musculus (Mouse).